A 589-amino-acid polypeptide reads, in one-letter code: ATP-dependent lipid A-core flippase (589 aa).

The next 5 helical transmembrane spans lie at 29–49, 68–88, 157–177, 254–274, and 283–303; these read WLLVVAACGALLEAVAGSTFL, ALWLPLGIVGLFLLRGIAGYI, VIGALVVMLWYSWTVTLAILL, LSSAAVQLLGAVGLAMLLLIA, and LSPGDFVSLMTSMIAVIPALK. Residues 32–314 enclose the ABC transmembrane type-1 domain; the sequence is VVAACGALLE…LTNVQNMLQS (283 aa). Positions 346–582 constitute an ABC transporter domain; the sequence is IEFRGITARY…DGLYAYLYSM (237 aa). Residue 380–387 coordinates ATP; the sequence is GRSGSGKS.

Belongs to the ABC transporter superfamily. Lipid exporter (TC 3.A.1.106) family. Homodimer.

The protein localises to the cell inner membrane. It carries out the reaction ATP + H2O + lipid A-core oligosaccharideSide 1 = ADP + phosphate + lipid A-core oligosaccharideSide 2.. Involved in lipopolysaccharide (LPS) biosynthesis. Translocates lipid A-core from the inner to the outer leaflet of the inner membrane. Transmembrane domains (TMD) form a pore in the inner membrane and the ATP-binding domain (NBD) is responsible for energy generation. This chain is ATP-dependent lipid A-core flippase, found in Xylella fastidiosa (strain 9a5c).